Consider the following 338-residue polypeptide: DNA-directed RNA polymerase subunit alpha (338 aa).

Residues 1–234 (MIHKNWAELI…DQLSIFVNFE (234 aa)) form an alpha N-terminal domain (alpha-NTD) region. Positions 250 to 338 (FNPLLLKKVD…DLAKRFEDQF (89 aa)) are alpha C-terminal domain (alpha-CTD).

This sequence belongs to the RNA polymerase alpha chain family. In terms of assembly, homodimer. The RNAP catalytic core consists of 2 alpha, 1 beta, 1 beta' and 1 omega subunit. When a sigma factor is associated with the core the holoenzyme is formed, which can initiate transcription.

It carries out the reaction RNA(n) + a ribonucleoside 5'-triphosphate = RNA(n+1) + diphosphate. In terms of biological role, DNA-dependent RNA polymerase catalyzes the transcription of DNA into RNA using the four ribonucleoside triphosphates as substrates. This Cereibacter sphaeroides (strain ATCC 17029 / ATH 2.4.9) (Rhodobacter sphaeroides) protein is DNA-directed RNA polymerase subunit alpha.